Consider the following 445-residue polypeptide: Phosphoglucosamine mutase (445 aa).

Catalysis depends on Ser102, which acts as the Phosphoserine intermediate. Mg(2+) is bound by residues Ser102, Asp241, Asp243, and Asp245. Ser102 is subject to Phosphoserine.

It belongs to the phosphohexose mutase family. Mg(2+) is required as a cofactor. Post-translationally, activated by phosphorylation.

It carries out the reaction alpha-D-glucosamine 1-phosphate = D-glucosamine 6-phosphate. Functionally, catalyzes the conversion of glucosamine-6-phosphate to glucosamine-1-phosphate. The protein is Phosphoglucosamine mutase of Enterobacter sp. (strain 638).